Here is a 236-residue protein sequence, read N- to C-terminus: MALKKKLNFLWTLVLYLIASRLPKAFGKDLPRVPTITDPKFIDAFLNIHNELRRKVQPPAADMNQLFWDQQLAKLAKAWTRECKLAHNPCIKQRYECLEDYDFIGENIYLGRIETQPEDVVINWYNESKYFNFDFNTCSEMCGHYTQVVWAKTVKIGCAVSNCPNLKGFSAGLFVCNYSPAGNFIGFRPYTRGDSCSMCGQKTCENSLCRPMNRKTPHHKAACHVLVLGFILQSLL.

The first 27 residues, 1–27 (MALKKKLNFLWTLVLYLIASRLPKAFG), serve as a signal peptide directing secretion. Positions 46–178 (LNIHNELRRK…FSAGLFVCNY (133 aa)) constitute an SCP domain. An N-linked (GlcNAc...) asparagine glycan is attached at Asn126.

The protein belongs to the CRISP family. Part of a oolemmal binding multimeric complex (IZUMO1 complex) composed at least of IZUMO1 and GLIPR1L1; the complex assemblage is influenced by the maturation status of the male germ cell. Interacts with IZUMO1. Post-translationally, N-glycosylated. N-glycosylation decreases during the transit in the caput. In terms of tissue distribution, expressed in testis (at protein level). Little or no expression in other tissues tested.

The protein resides in the cytoplasmic vesicle. The protein localises to the secretory vesicle. It is found in the acrosome. It localises to the cell membrane. Its subcellular location is the membrane raft. The protein resides in the secreted. Its function is as follows. Required for optimal fertilization at the stage of sperm-oocyte fusion, plays a role in optimizing acrosome function, the translocation of IZUMO1 during the acrosome reaction and the fertilization process. Component of epididymosomes, one type of membranous microvesicules which mediate the transfer of lipids and proteins to spermatozoa plasma membrane during epididymal maturation. Also component of the CD9-positive microvesicules found in the cauda region. The protein is GLIPR1-like protein 1 of Mus musculus (Mouse).